A 207-amino-acid polypeptide reads, in one-letter code: MRTRVKICGVTRPEDAAAAVELGADAIGLVFCDASPRAVDMKEARAIVAAVPAFVSVVGLFVDPKPGQVEVAVEGLHLDTLQFHGNEAPELCRHYERRYVKAVPMGGGADPSEYVAAYPDASGFLFDSHRVGERGGRGESFDHDTIPGGVRGLTVAGGLSAENVAEVVRKVRPFAVDVSSGVESEPGIKDRERIARFLAEVERGDET.

It belongs to the TrpF family.

It carries out the reaction N-(5-phospho-beta-D-ribosyl)anthranilate = 1-(2-carboxyphenylamino)-1-deoxy-D-ribulose 5-phosphate. It participates in amino-acid biosynthesis; L-tryptophan biosynthesis; L-tryptophan from chorismate: step 3/5. This chain is N-(5'-phosphoribosyl)anthranilate isomerase, found in Halorhodospira halophila (strain DSM 244 / SL1) (Ectothiorhodospira halophila (strain DSM 244 / SL1)).